Consider the following 192-residue polypeptide: Xanthine phosphoribosyltransferase (192 aa).

Positions 20 and 27 each coordinate xanthine. Ala128–Ala132 lines the 5-phospho-alpha-D-ribose 1-diphosphate pocket. Lys156 contributes to the xanthine binding site.

Belongs to the purine/pyrimidine phosphoribosyltransferase family. Xpt subfamily. In terms of assembly, homodimer.

It localises to the cytoplasm. It carries out the reaction XMP + diphosphate = xanthine + 5-phospho-alpha-D-ribose 1-diphosphate. It functions in the pathway purine metabolism; XMP biosynthesis via salvage pathway; XMP from xanthine: step 1/1. Converts the preformed base xanthine, a product of nucleic acid breakdown, to xanthosine 5'-monophosphate (XMP), so it can be reused for RNA or DNA synthesis. This Lactobacillus gasseri (strain ATCC 33323 / DSM 20243 / BCRC 14619 / CIP 102991 / JCM 1131 / KCTC 3163 / NCIMB 11718 / NCTC 13722 / AM63) protein is Xanthine phosphoribosyltransferase.